Here is a 345-residue protein sequence, read N- to C-terminus: Phosphoribosylformylglycinamidine cyclo-ligase (345 aa).

It belongs to the AIR synthase family.

The protein localises to the cytoplasm. It catalyses the reaction 2-formamido-N(1)-(5-O-phospho-beta-D-ribosyl)acetamidine + ATP = 5-amino-1-(5-phospho-beta-D-ribosyl)imidazole + ADP + phosphate + H(+). The protein operates within purine metabolism; IMP biosynthesis via de novo pathway; 5-amino-1-(5-phospho-D-ribosyl)imidazole from N(2)-formyl-N(1)-(5-phospho-D-ribosyl)glycinamide: step 2/2. This chain is Phosphoribosylformylglycinamidine cyclo-ligase, found in Escherichia coli O45:K1 (strain S88 / ExPEC).